The following is a 252-amino-acid chain: Putative zinc finger CCCH domain-containing protein 58 (252 aa).

The C3H1-type zinc finger occupies asparagine 35 to glutamate 62. 3 disordered regions span residues arginine 71–threonine 95, arginine 109–aspartate 180, and threonine 215–lysine 252. Low complexity-rich tracts occupy residues serine 133–proline 149 and isoleucine 229–threonine 238.

The sequence is that of Putative zinc finger CCCH domain-containing protein 58 from Oryza sativa subsp. japonica (Rice).